We begin with the raw amino-acid sequence, 365 residues long: Cobalt-precorrin-5B C(1)-methyltransferase (365 aa).

The protein belongs to the CbiD family.

It carries out the reaction Co-precorrin-5B + S-adenosyl-L-methionine = Co-precorrin-6A + S-adenosyl-L-homocysteine. The protein operates within cofactor biosynthesis; adenosylcobalamin biosynthesis; cob(II)yrinate a,c-diamide from sirohydrochlorin (anaerobic route): step 6/10. In terms of biological role, catalyzes the methylation of C-1 in cobalt-precorrin-5B to form cobalt-precorrin-6A. In Variovorax paradoxus (strain S110), this protein is Cobalt-precorrin-5B C(1)-methyltransferase.